The following is a 431-amino-acid chain: Tyrosine--tRNA ligase (431 aa).

An L-tyrosine-binding site is contributed by Y34. Positions 39-48 (PTADSLHIGH) match the 'HIGH' region motif. Y171 and Q175 together coordinate L-tyrosine. The 'KMSKS' region motif lies at 231 to 235 (KFGKT). ATP is bound at residue K234. Residues 353 to 422 (INVVEALVKT…GKYTILRRGK (70 aa)) form the S4 RNA-binding domain.

Belongs to the class-I aminoacyl-tRNA synthetase family. TyrS type 1 subfamily. Homodimer.

The protein resides in the cytoplasm. The catalysed reaction is tRNA(Tyr) + L-tyrosine + ATP = L-tyrosyl-tRNA(Tyr) + AMP + diphosphate + H(+). Functionally, catalyzes the attachment of tyrosine to tRNA(Tyr) in a two-step reaction: tyrosine is first activated by ATP to form Tyr-AMP and then transferred to the acceptor end of tRNA(Tyr). In Neisseria meningitidis serogroup C (strain 053442), this protein is Tyrosine--tRNA ligase.